A 177-amino-acid polypeptide reads, in one-letter code: Peptide deformylase 2 (177 aa).

Positions 99 and 141 each coordinate Fe cation. Glu-142 is an active-site residue. Position 145 (His-145) interacts with Fe cation.

The protein belongs to the polypeptide deformylase family. Fe(2+) is required as a cofactor.

The catalysed reaction is N-terminal N-formyl-L-methionyl-[peptide] + H2O = N-terminal L-methionyl-[peptide] + formate. Functionally, removes the formyl group from the N-terminal Met of newly synthesized proteins. Requires at least a dipeptide for an efficient rate of reaction. N-terminal L-methionine is a prerequisite for activity but the enzyme has broad specificity at other positions. This Ralstonia nicotianae (strain ATCC BAA-1114 / GMI1000) (Ralstonia solanacearum) protein is Peptide deformylase 2.